A 533-amino-acid polypeptide reads, in one-letter code: Glucose-6-phosphate isomerase (533 aa).

Residue Glu341 is the Proton donor of the active site. Active-site residues include His372 and Lys501.

Belongs to the GPI family.

Its subcellular location is the cytoplasm. It carries out the reaction alpha-D-glucose 6-phosphate = beta-D-fructose 6-phosphate. The protein operates within carbohydrate biosynthesis; gluconeogenesis. It functions in the pathway carbohydrate degradation; glycolysis; D-glyceraldehyde 3-phosphate and glycerone phosphate from D-glucose: step 2/4. Catalyzes the reversible isomerization of glucose-6-phosphate to fructose-6-phosphate. The polypeptide is Glucose-6-phosphate isomerase (Cereibacter sphaeroides (strain ATCC 17025 / ATH 2.4.3) (Rhodobacter sphaeroides)).